A 106-amino-acid chain; its full sequence is UPF0145 protein Pput_2816 (106 aa).

This sequence belongs to the UPF0145 family.

The chain is UPF0145 protein Pput_2816 from Pseudomonas putida (strain ATCC 700007 / DSM 6899 / JCM 31910 / BCRC 17059 / LMG 24140 / F1).